The following is a 446-amino-acid chain: Glutamate-1-semialdehyde 2,1-aminomutase (446 aa).

An N6-(pyridoxal phosphate)lysine modification is found at Lys-278.

Belongs to the class-III pyridoxal-phosphate-dependent aminotransferase family. HemL subfamily. As to quaternary structure, homodimer. Pyridoxal 5'-phosphate is required as a cofactor.

The protein localises to the cytoplasm. The catalysed reaction is (S)-4-amino-5-oxopentanoate = 5-aminolevulinate. The protein operates within porphyrin-containing compound metabolism; protoporphyrin-IX biosynthesis; 5-aminolevulinate from L-glutamyl-tRNA(Glu): step 2/2. This chain is Glutamate-1-semialdehyde 2,1-aminomutase, found in Deinococcus geothermalis (strain DSM 11300 / CIP 105573 / AG-3a).